Consider the following 327-residue polypeptide: Putative HTH-type transcriptional regulatory protein MM_0444 (327 aa).

One can recognise an HTH cro/C1-type domain in the interval 132–190 (LKKARTTQSMSLGTLASMVGVSRRTISKYEEEGMDASIDVVLHLEDIFGVELAKPIDIL). A DNA-binding region (H-T-H motif) is located at residues 143–162 (LGTLASMVGVSRRTISKYEE). Residues 195-214 (SRKPRKKAEPEKEEPKGKPG) are disordered. Positions 201-211 (KAEPEKEEPKG) are enriched in basic and acidic residues.

This Methanosarcina mazei (strain ATCC BAA-159 / DSM 3647 / Goe1 / Go1 / JCM 11833 / OCM 88) (Methanosarcina frisia) protein is Putative HTH-type transcriptional regulatory protein MM_0444.